Reading from the N-terminus, the 500-residue chain is Transcription termination/antitermination protein NusA (500 aa).

The region spanning 135 to 205 (GEIVTGVVKK…RGAQLFVTRS (71 aa)) is the S1 motif domain. A KH domain is found at 307–373 (KHTMDIAVEA…FTKYLDIDEE (67 aa)). Repeat copies occupy residues 369–419 (DIDE…KNAL) and 444–494 (GLDR…RNIC). Residues 369-494 (DIDEEFATVL…ELIMAARNIC (126 aa)) are 2 X 51 AA approximate repeats.

Belongs to the NusA family. In terms of assembly, monomer. Binds directly to the core enzyme of the DNA-dependent RNA polymerase and to nascent RNA.

The protein localises to the cytoplasm. Participates in both transcription termination and antitermination. The sequence is that of Transcription termination/antitermination protein NusA from Salmonella typhimurium (strain LT2 / SGSC1412 / ATCC 700720).